A 276-amino-acid chain; its full sequence is Putative translation initiation factor eIF-2B subunit 2-like (276 aa).

This sequence belongs to the eIF-2B alpha/beta/delta subunits family. Complex of two different subunits.

In terms of biological role, catalyzes the exchange of initiation factor 2-bound GDP for GTP. The sequence is that of Putative translation initiation factor eIF-2B subunit 2-like from Pyrococcus abyssi (strain GE5 / Orsay).